The primary structure comprises 95 residues: MNCKLTALLFLGLIVIASCGWINEKKMQQKIDEKIGKNIIGGMAKAVIHKMAKNEFQCVANVDTLGNCKKHCAKTTGEKGYCHGTKCKCGIELSY.

The first 19 residues, 1–19 (MNCKLTALLFLGLIVIASC), serve as a signal peptide directing secretion. The BetaSPN-type CS-alpha/beta domain occupies 55 to 95 (EFQCVANVDTLGNCKKHCAKTTGEKGYCHGTKCKCGIELSY). Disulfide bonds link Cys-58/Cys-82, Cys-68/Cys-87, and Cys-72/Cys-89.

Post-translationally, disulfide bonds are critical for antiviral function, and their disruption inhibit viral activity. Expressed by the venom gland.

The protein resides in the secreted. In terms of biological role, antibacterial peptide. Dose-dependently inhibits Dengue virus (DENV), Zika virus (ZIKV) and Hepatitis C virus (HCV) infections. Two mechanisms of action have been described by two different groups: one involving activity on extracellular particles, and the other regulating the immune system. On Dengue virus (DENV), Zika virus (ZIKV), suppress the established viral infection, similar to the effect of interferon (IFN)-beta. Mechanistically, upregulates the expression of IFN-beta by activating interferon regulatory transcription factor 3 (IRF3) phosphorylation. On HCV and DENV, acts by inactivating extra-cellular infectious particles without affecting viral replication. Shows very weak inhibition on measles virus. Is neither toxic nor hemolytic in vitro at high concentrations. This Scorpio palmatus (Israeli golden scorpion) protein is Scorpine-like peptide Smp76.